The chain runs to 312 residues: MDNCNAWDKLLSQNESTINSTETATITAIIYSPSSKTLHQFINICFPEGSNSILDTTLINYATIGWTNDLKENYSVDVYTLIRNTDDALDLLKPFLQEHSSKVRWLILLDWTLNDQKLWLNELSYAFNKIKQLNDDNEFSVWCLNSGEILNLQRHTTVWQSVHIDFILQTLRSFCYFNDSSLFYICEDHTEEKREEAQRLKYQELLKHFCEDRDMKDHIEMVKRSEILIPKGCDSIGLIKTVDERFEPTEVKEQHFLARYMDFIPTIDKIREDRKTTSGIDLDKLYPLEVFKVNIQEELGKMFAKYRENSRI.

It belongs to the dynein light intermediate chain DYN3 family. The dynein complex consists of at least two heavy chains and a number of intermediate and light chains. Interacts with DYN1.

The protein localises to the cytoplasm. It is found in the cytoskeleton. Component of the cytoplasmic dynein which acts as a motor for the intracellular retrograde motility of vesicles and organelles along microtubules. May play an important role in the proper orientation of the mitotic spindle into the budding daughter cell yeast. Probably required for normal progression of the cell cycle. In Saccharomyces cerevisiae (strain ATCC 204508 / S288c) (Baker's yeast), this protein is Cytoplasmic dynein intermediate light chain DYN3 (DYN3).